The following is a 353-amino-acid chain: Photosystem II D2 protein (353 aa).

T2 carries the post-translational modification N-acetylthreonine. T2 carries the post-translational modification Phosphothreonine. Residues 41–61 (CAYFALGGWLTGTTFVTSWYT) form a helical membrane-spanning segment. Residue H118 participates in chlorophyll a binding. Residues 125–141 (GFMLRQFELARSVQLRP) form a helical membrane-spanning segment. Residues Q130 and N143 each coordinate pheophytin a. The helical transmembrane segment at 153 to 166 (VFVSVFLIYPLGQS) threads the bilayer. H198 is a binding site for chlorophyll a. The chain crosses the membrane as a helical span at residues 208–228 (AALLCAIHGATVENTLFEDGD). H215 and F262 together coordinate a plastoquinone. H215 is a binding site for Fe cation. Fe cation is bound at residue H269. The chain crosses the membrane as a helical span at residues 279 to 295 (GLWMSAIGVVGLALNLR).

This sequence belongs to the reaction center PufL/M/PsbA/D family. PSII is composed of 1 copy each of membrane proteins PsbA, PsbB, PsbC, PsbD, PsbE, PsbF, PsbH, PsbI, PsbJ, PsbK, PsbL, PsbM, PsbT, PsbX, PsbY, PsbZ, Psb30/Ycf12, at least 3 peripheral proteins of the oxygen-evolving complex and a large number of cofactors. It forms dimeric complexes. The cofactor is The D1/D2 heterodimer binds P680, chlorophylls that are the primary electron donor of PSII, and subsequent electron acceptors. It shares a non-heme iron and each subunit binds pheophytin, quinone, additional chlorophylls, carotenoids and lipids. There is also a Cl(-1) ion associated with D1 and D2, which is required for oxygen evolution. The PSII complex binds additional chlorophylls, carotenoids and specific lipids..

It is found in the plastid. Its subcellular location is the chloroplast thylakoid membrane. It carries out the reaction 2 a plastoquinone + 4 hnu + 2 H2O = 2 a plastoquinol + O2. Its function is as follows. Photosystem II (PSII) is a light-driven water:plastoquinone oxidoreductase that uses light energy to abstract electrons from H(2)O, generating O(2) and a proton gradient subsequently used for ATP formation. It consists of a core antenna complex that captures photons, and an electron transfer chain that converts photonic excitation into a charge separation. The D1/D2 (PsbA/PsbD) reaction center heterodimer binds P680, the primary electron donor of PSII as well as several subsequent electron acceptors. D2 is needed for assembly of a stable PSII complex. In Zygnema circumcarinatum (Green alga), this protein is Photosystem II D2 protein.